Here is a 287-residue protein sequence, read N- to C-terminus: Large ribosomal subunit protein uL2 (287 aa).

The segment at 222–266 (RGIRPTVRGSAMNPNDHPHGGGEGRSPVGRDAPRTPWGKRHMGVK) is disordered.

This sequence belongs to the universal ribosomal protein uL2 family. In terms of assembly, part of the 50S ribosomal subunit. Forms a bridge to the 30S subunit in the 70S ribosome.

In terms of biological role, one of the primary rRNA binding proteins. Required for association of the 30S and 50S subunits to form the 70S ribosome, for tRNA binding and peptide bond formation. It has been suggested to have peptidyltransferase activity; this is somewhat controversial. Makes several contacts with the 16S rRNA in the 70S ribosome. The chain is Large ribosomal subunit protein uL2 from Mycoplasma pneumoniae (strain ATCC 29342 / M129 / Subtype 1) (Mycoplasmoides pneumoniae).